A 478-amino-acid polypeptide reads, in one-letter code: MFKFHQVKHIFEILDKMRCLRKRFTVSFLGVLVIFLLFMNLYIEDSYVLEGDKQLVRETSIHQLNPERYVHTFKYLSNFSGTINVTYRYLAVMPFQRKRFLTIGLSSVRRKKGNYLLETIKSIFEQSSYEELKEISVVVHLADFNSSWREVMVQDITQKFAHHIIAGRLMVIHAPEEYYPVLNGLKRNYNDPEDRVRFRSKQNVDYAFLLNFCANISDYYVMLEDDVRCSKNFLTAIKKVITSLQGTYWVTLEFSKLGYIGKLYHSHDLPRLAHFLLMFYQEMPCDWLLTHFRGLLAQKNVIRFKPSLFQHMGYYSSYKGTENKLKDDDFEEELIDLPDNPPASLYTNMSVFENYDASKAYSSVDGYFWGKPPSTGDVFVVVFENPVIIKKIKVSTGTEDRQNDILHHGALDVGGYIRYFKQNRQCITYIRLGEFKNGNFEVSDVNQKIPFDVHCMRIHVTKTQKEWLIIRSISIWTS.

The Cytoplasmic segment spans residues 1–23 (MFKFHQVKHIFEILDKMRCLRKR). The chain crosses the membrane as a helical; Signal-anchor for type II membrane protein span at residues 24 to 44 (FTVSFLGVLVIFLLFMNLYIE). Over 45-478 (DSYVLEGDKQ…IIRSISIWTS (434 aa)) the chain is Lumenal. Asn84, Asn215, and Asn348 each carry an N-linked (GlcNAc...) asparagine glycan.

The protein belongs to the glycosyltransferase 54 family. A divalent metal cation serves as cofactor.

The protein resides in the golgi apparatus membrane. It carries out the reaction N(4)-{beta-D-GlcNAc-(1-&gt;2)-alpha-D-Man-(1-&gt;3)-[beta-D-GlcNAc-(1-&gt;2)-alpha-D-Man-(1-&gt;6)]-beta-D-Man-(1-&gt;4)-beta-D-GlcNAc-(1-&gt;4)-beta-D-GlcNAc}-L-asparaginyl-[protein] + UDP-N-acetyl-alpha-D-glucosamine = N(4)-{beta-D-GlcNAc-(1-&gt;2)-[beta-D-GlcNAc-(1-&gt;4)]-alpha-D-Man-(1-&gt;3)-[beta-D-GlcNAc-(1-&gt;2)-alpha-D-Man-(1-&gt;6)]-beta-D-Man-(1-&gt;4)-beta-D-GlcNAc-(1-&gt;4)-beta-D-GlcNAc}-L-asparaginyl-[protein] + UDP + H(+). Its pathway is protein modification; protein glycosylation. Functionally, glycosyltransferase that participates in the transfer of N-acetylglucosamine (GlcNAc) to the core mannose residues of N-linked glycans. Catalyzes the formation of the GlcNAcbeta1-4 branch on the GlcNAcbeta1-2Manalpha1-3 arm of the core structure of N-linked glycans. Essential for the production of tri- and tetra-antennary N-linked sugar chains. Does not catalyze the transfer of GlcNAc to the Manalpha1-6 arm to form GlcNAcBeta1-4Manalpha1-6 linkage ('GnT-VI' activity). This Sus scrofa (Pig) protein is Alpha-1,3-mannosyl-glycoprotein 4-beta-N-acetylglucosaminyltransferase C (MGAT4C).